The sequence spans 457 residues: Argininosuccinate lyase (457 aa).

The protein belongs to the lyase 1 family. Argininosuccinate lyase subfamily.

It is found in the cytoplasm. It catalyses the reaction 2-(N(omega)-L-arginino)succinate = fumarate + L-arginine. The protein operates within amino-acid biosynthesis; L-arginine biosynthesis; L-arginine from L-ornithine and carbamoyl phosphate: step 3/3. This chain is Argininosuccinate lyase, found in Shewanella sediminis (strain HAW-EB3).